The following is a 691-amino-acid chain: Menaquinone reductase, molybdopterin-binding-like subunit (691 aa).

The tat-type signal signal peptide spans 1-27 (MALDRRGFLKFIGGATAGILATPVVWK). A 4Fe-4S Mo/W bis-MGD-type domain is found at 50–106 (NSYVPTVSKLCPTGIGVRVRLVDGRPVRVIGNPEHPLSKGGVSSIAAAEVQMLYSPA).

The protein belongs to the prokaryotic molybdopterin-containing oxidoreductase family. As to quaternary structure, the Qrc complex is composed of four subunits: QrcA, QrcB, QrcC and QrcD. Can form a supercomplex with the [NiFe] hydrogenase HynA1 and the tetraheme Type I cytochrome c3 TpIc(3), its physiological electron donors. The cofactor is There is no molybdenum or tungsten pterin cofactor present in the Qrc complex, despite the similarity of QrcB to molybdopterin-containing oxidoreductases.. Predicted to be exported by the Tat system. The position of the signal peptide cleavage has not been experimentally proven.

It is found in the periplasm. Functionally, component of the respiratory Qrc complex, that catalyzes the reduction of the menaquinone pool using electrons transferred from the reduced periplasmic cytochrome c3, and which is probably involved in sulfate respiration. Is likely essential for growth on H(2) or formate since the periplasmic hydrogenases and/or formate dehydrogenases act as primary electron donors for the Qrc complex. The function of the QrcB subunit is unknown; in the absence of a catalytic site, it may provide a structural scaffold for the other subunits. The polypeptide is Menaquinone reductase, molybdopterin-binding-like subunit (Nitratidesulfovibrio vulgaris (strain ATCC 29579 / DSM 644 / CCUG 34227 / NCIMB 8303 / VKM B-1760 / Hildenborough) (Desulfovibrio vulgaris)).